The following is a 184-amino-acid chain: Gremlin-1 (184 aa).

The first 24 residues, M1–G24, serve as a signal peptide directing secretion. Residues G24–S77 form a disordered region. N-linked (GlcNAc...) asparagine glycosylation occurs at N42. 4 disulfides stabilise this stretch: C94/C144, C108/C158, C118/C176, and C122/C178. In terms of domain architecture, CTCK spans C94 to D184.

The protein belongs to the DAN family. As to quaternary structure, homodimer; can also form homooligomers. Interacts with BMP2; can form higher oligomers with BMP2. Interacts with SLIT1 and SLIT2 in a glycosylation-dependent manner. As to expression, highly expressed in small intestine, fetal brain and colon. Expression is restricted to intestinal subepithelial myofibroblasts (ISEMFs) at the crypt base. In subjects with HMPS1, by contrast, GREM1 is expressed, not only in basal ISEMFs, but also at very high levels in epithelial cells (predominantly colonocytes), with expression extending most of the way up the sides of the crypt. Weakly expressed in brain, ovary, prostate, pancreas and skeletal muscle. In brain found in the region localized around the internal capsule in the large subcortical nuclei, including caudate, putamen, substantia nigra, thalamus and subthalamus. Predominantly expressed in normal cells including neurons, astrocytes and fibroblasts.

The protein localises to the secreted. Cytokine that may play an important role during carcinogenesis and metanephric kidney organogenesis, as a BMP antagonist required for early limb outgrowth and patterning in maintaining the FGF4-SHH feedback loop. Down-regulates the BMP4 signaling in a dose-dependent manner. Antagonist of BMP2; inhibits BMP2-mediated differentiation of osteoblasts (in vitro). Acts as inhibitor of monocyte chemotaxis. Can inhibit the growth or viability of normal cells but not transformed cells when is overexpressed. The sequence is that of Gremlin-1 (GREM1) from Homo sapiens (Human).